A 514-amino-acid polypeptide reads, in one-letter code: 2'-5'-oligoadenylate synthase-like protein (514 aa).

Ala-2 is modified (N-acetylalanine). Ubiquitin-like domains lie at 354–433 (IHLT…IPSE) and 434–509 (IQVF…KGEA).

The protein belongs to the 2-5A synthase family. Specifically interacts with the ligand binding domain of the thyroid receptor (TR). TRIP14 does not require the presence of thyroid hormone for its interaction. Binds MBD1. In terms of tissue distribution, expressed in most tissues, with the highest levels in primary blood Leukocytes and other hematopoietic system tissues, colon, stomach and to some extent in testis.

It is found in the nucleus. The protein resides in the nucleolus. Its subcellular location is the cytoplasm. Functionally, does not have 2'-5'-OAS activity, but can bind double-stranded RNA. Displays antiviral activity against encephalomyocarditis virus (EMCV) and hepatitis C virus (HCV) via an alternative antiviral pathway independent of RNase L. The sequence is that of 2'-5'-oligoadenylate synthase-like protein (OASL) from Homo sapiens (Human).